Here is a 274-residue protein sequence, read N- to C-terminus: Penicillin-insensitive murein endopeptidase (274 aa).

The N-terminal stretch at 1–19 (MKNTVIALLALLASAGSLA) is a signal peptide. 3 cysteine pairs are disulfide-bonded: Cys44–Cys265, Cys187–Cys235, and Cys216–Cys223. Residues His110, His113, Asp120, Asp147, His150, and His211 each coordinate Zn(2+). Residues 224–263 (EDQAPPPPGDGCGAELQSWFEPPKPGSTPPVKKTPPPLPP) are disordered. Pro residues predominate over residues 245–263 (PPKPGSTPPVKKTPPPLPP).

The protein belongs to the peptidase M74 family. In terms of assembly, dimer. Zn(2+) serves as cofactor.

It is found in the periplasm. Its function is as follows. Murein endopeptidase that cleaves the D-alanyl-meso-2,6-diamino-pimelyl amide bond that connects peptidoglycan strands. Likely plays a role in the removal of murein from the sacculus. In Klebsiella pneumoniae (strain 342), this protein is Penicillin-insensitive murein endopeptidase.